The primary structure comprises 203 residues: MFIVVEGGEGAGKTQFIQALSKRLIEEGREIVTTREPGGCSLGDSVRGLLLDPEQKISPYAELLLFLAARAQHIQEKIIPALKSGKTVISDRFHDSTIVYQGIAGGLGESFVTNLCYHVVGDKPFLPDITFLLDIPAREGLLRKARQKHLDKFEQKPQIFHRSVREGFLALAEKAPDRYKVLDALLPTEASVDQALLQIRALI.

7 to 14 (GGEGAGKT) is an ATP binding site.

This sequence belongs to the thymidylate kinase family.

The catalysed reaction is dTMP + ATP = dTDP + ADP. In terms of biological role, phosphorylation of dTMP to form dTDP in both de novo and salvage pathways of dTTP synthesis. The polypeptide is Thymidylate kinase (tmk) (Chlamydia trachomatis serovar D (strain ATCC VR-885 / DSM 19411 / UW-3/Cx)).